We begin with the raw amino-acid sequence, 666 residues long: Transketolase (666 aa).

Position 28 (histidine 28) interacts with substrate. Thiamine diphosphate-binding positions include histidine 68 and glycine 116–leucine 118. Residue aspartate 157 participates in Mg(2+) binding. Thiamine diphosphate-binding residues include glycine 158 and asparagine 187. Asparagine 187 and isoleucine 189 together coordinate Mg(2+). 3 residues coordinate substrate: histidine 262, arginine 356, and serine 383. Histidine 262 contacts thiamine diphosphate. The active-site Proton donor is the glutamate 410. Position 436 (phenylalanine 436) interacts with thiamine diphosphate. Substrate contacts are provided by histidine 460, aspartate 468, and arginine 519.

This sequence belongs to the transketolase family. In terms of assembly, homodimer. Mg(2+) serves as cofactor. Ca(2+) is required as a cofactor. It depends on Mn(2+) as a cofactor. The cofactor is Co(2+). Requires thiamine diphosphate as cofactor.

It carries out the reaction D-sedoheptulose 7-phosphate + D-glyceraldehyde 3-phosphate = aldehydo-D-ribose 5-phosphate + D-xylulose 5-phosphate. Catalyzes the transfer of a two-carbon ketol group from a ketose donor to an aldose acceptor, via a covalent intermediate with the cofactor thiamine pyrophosphate. The protein is Transketolase (tkt) of Halalkalibacterium halodurans (strain ATCC BAA-125 / DSM 18197 / FERM 7344 / JCM 9153 / C-125) (Bacillus halodurans).